The chain runs to 629 residues: tRNA uridine 5-carboxymethylaminomethyl modification enzyme MnmG (629 aa).

13-18 provides a ligand contact to FAD; it reads GGGHAG. Residue 273 to 287 participates in NAD(+) binding; it reads GPRYCPSIEDKITRF.

This sequence belongs to the MnmG family. Homodimer. Heterotetramer of two MnmE and two MnmG subunits. Requires FAD as cofactor.

Its subcellular location is the cytoplasm. Functionally, NAD-binding protein involved in the addition of a carboxymethylaminomethyl (cmnm) group at the wobble position (U34) of certain tRNAs, forming tRNA-cmnm(5)s(2)U34. The polypeptide is tRNA uridine 5-carboxymethylaminomethyl modification enzyme MnmG (Colwellia psychrerythraea (strain 34H / ATCC BAA-681) (Vibrio psychroerythus)).